Reading from the N-terminus, the 206-residue chain is MAEDADMRNELEEMQRRADQLADESLESTRRMLQLVEESKDAGIRTLVMLDEQGEQLERIEEGMDQINKDMKEAEKNSTDLGKFCGLCVCPCNKLKSSDAYKKAWGNNQDGVVASQPARVVDEREQMAISGGFIRRVTNDARENEMDENLEQVSGIIGNLRHMALDMGNEIDTQNRQIDRIMEKADSNKTRIDEANQRATKMLGSG.

Residues 1-20 show a composition bias toward basic and acidic residues; sequence MAEDADMRNELEEMQRRADQ. The segment at 1-25 is disordered; the sequence is MAEDADMRNELEEMQRRADQLADES. The interval 1–75 is interaction with CENPF; sequence MAEDADMRNE…QINKDMKEAE (75 aa). Residues 19 to 81 form the t-SNARE coiled-coil homology 1 domain; it reads DQLADESLES…KEAEKNSTDL (63 aa). S-palmitoyl cysteine attachment occurs at residues cysteine 85, cysteine 88, cysteine 90, and cysteine 92. The interval 111 to 120 is interaction with ZDHHC17; sequence GVVASQPARV. At threonine 138 the chain carries Phosphothreonine. Positions 140–202 constitute a t-SNARE coiled-coil homology 2 domain; the sequence is DARENEMDEN…DEANQRATKM (63 aa). Serine 154 and serine 187 each carry phosphoserine.

Belongs to the SNAP-25 family. As to quaternary structure, part of the SNARE core complex containing SNAP25, VAMP2 and STX1A; this complex binds CPLX1. Found in a complex containing SYT1, SV2B and syntaxin-1. Found in a ternary complex with STX1A and VAMP8. Interacts with HSC70 and with SYT9, forming a complex with DNAJC5. The interaction with SYT9 is inhibited in presence of calcium. Isoform 1 and isoform 2 interact with BLOC1S6. Interacts with CENPF. Interacts with EQTN. Interacts with HGS. Interacts with KCNB1 (via N-terminus); reduces the voltage-dependent potassium channel KCNB1 activity in pancreatic beta cells. Interacts with OTOF. Interacts with RIMS1. Interacts with SNAPIN. Interacts with STXBP6. Interacts with TRIM9. Interacts with ZDHHC13 (via ANK repeats). Interacts with ZDHHC17 (via ANK repeats). Associates with the BLOC-1 complex. Interacts with PLCL1 (via C2 domain). Interacts with PRRT2; this interaction may impair the formation of the SNARE complex. Interacts with alpha-synuclein/SNCA. Interacts with PRPH2. Interacts with ROM1. Interacts with STX3. In terms of processing, palmitoylated. Cys-85 appears to be the main site, and palmitoylation is required for membrane association.

It localises to the cytoplasm. The protein resides in the perinuclear region. It is found in the cell membrane. The protein localises to the synapse. Its subcellular location is the synaptosome. It localises to the photoreceptor inner segment. In terms of biological role, t-SNARE involved in the molecular regulation of neurotransmitter release. May play an important role in the synaptic function of specific neuronal systems. Associates with proteins involved in vesicle docking and membrane fusion. Regulates plasma membrane recycling through its interaction with CENPF. Modulates the gating characteristics of the delayed rectifier voltage-dependent potassium channel KCNB1 in pancreatic beta cells. In Pongo abelii (Sumatran orangutan), this protein is Synaptosomal-associated protein 25 (SNAP25).